Reading from the N-terminus, the 238-residue chain is Ribonuclease PH (238 aa).

Phosphate is bound by residues Arg-86 and 124–126 (GTR).

It belongs to the RNase PH family. In terms of assembly, homohexameric ring arranged as a trimer of dimers.

It carries out the reaction tRNA(n+1) + phosphate = tRNA(n) + a ribonucleoside 5'-diphosphate. Its function is as follows. Phosphorolytic 3'-5' exoribonuclease that plays an important role in tRNA 3'-end maturation. Removes nucleotide residues following the 3'-CCA terminus of tRNAs; can also add nucleotides to the ends of RNA molecules by using nucleoside diphosphates as substrates, but this may not be physiologically important. Probably plays a role in initiation of 16S rRNA degradation (leading to ribosome degradation) during starvation. This Agrobacterium fabrum (strain C58 / ATCC 33970) (Agrobacterium tumefaciens (strain C58)) protein is Ribonuclease PH.